The chain runs to 358 residues: Alanine racemase (358 aa).

The active-site Proton acceptor; specific for D-alanine is lysine 35. Lysine 35 carries the N6-(pyridoxal phosphate)lysine modification. Residue arginine 130 participates in substrate binding. Tyrosine 255 functions as the Proton acceptor; specific for L-alanine in the catalytic mechanism. Methionine 303 contributes to the substrate binding site.

It belongs to the alanine racemase family. Pyridoxal 5'-phosphate serves as cofactor.

The catalysed reaction is L-alanine = D-alanine. It participates in amino-acid biosynthesis; D-alanine biosynthesis; D-alanine from L-alanine: step 1/1. Its function is as follows. Catalyzes the interconversion of L-alanine and D-alanine. May also act on other amino acids. This chain is Alanine racemase (alr), found in Shewanella sp. (strain MR-7).